A 66-amino-acid polypeptide reads, in one-letter code: Large ribosomal subunit protein bL33c (66 aa).

In terms of assembly, component of the chloroplast large ribosomal subunit (LSU). Mature 70S chloroplast ribosomes of higher plants consist of a small (30S) and a large (50S) subunit. The 30S small subunit contains 1 molecule of ribosomal RNA (16S rRNA) and 24 different proteins. The 50S large subunit contains 3 rRNA molecules (23S, 5S and 4.5S rRNA) and 33 different proteins.

Its subcellular location is the plastid. The protein resides in the chloroplast. Functionally, component of the chloroplast ribosome (chloro-ribosome), a dedicated translation machinery responsible for the synthesis of chloroplast genome-encoded proteins, including proteins of the transcription and translation machinery and components of the photosynthetic apparatus. In Spinacia oleracea (Spinach), this protein is Large ribosomal subunit protein bL33c (rpl33).